Consider the following 288-residue polypeptide: Thiamine-monophosphate kinase (288 aa).

The Mg(2+) site is built by aspartate 20, threonine 30, and aspartate 32. Aspartate 39 contacts substrate. The Mg(2+) site is built by aspartate 60 and aspartate 107. Residues glycine 106–aspartate 107 and arginine 130 each bind ATP. Aspartate 188 lines the Mg(2+) pocket. ATP is bound at residue serine 190. Aspartate 191 serves as a coordination point for Mg(2+). Tryptophan 286 contributes to the substrate binding site.

It belongs to the thiamine-monophosphate kinase family.

It carries out the reaction thiamine phosphate + ATP = thiamine diphosphate + ADP. The protein operates within cofactor biosynthesis; thiamine diphosphate biosynthesis; thiamine diphosphate from thiamine phosphate: step 1/1. Catalyzes the ATP-dependent phosphorylation of thiamine-monophosphate (TMP) to form thiamine-pyrophosphate (TPP), the active form of vitamin B1. This chain is Thiamine-monophosphate kinase, found in Halobacterium salinarum (strain ATCC 700922 / JCM 11081 / NRC-1) (Halobacterium halobium).